Here is a 366-residue protein sequence, read N- to C-terminus: Ribosomal RNA large subunit methyltransferase M (366 aa).

S-adenosyl-L-methionine contacts are provided by residues S188, C221 to G224, D240, D260, and D277. Catalysis depends on K306, which acts as the Proton acceptor.

This sequence belongs to the class I-like SAM-binding methyltransferase superfamily. RNA methyltransferase RlmE family. RlmM subfamily. Monomer.

It is found in the cytoplasm. It catalyses the reaction cytidine(2498) in 23S rRNA + S-adenosyl-L-methionine = 2'-O-methylcytidine(2498) in 23S rRNA + S-adenosyl-L-homocysteine + H(+). Catalyzes the 2'-O-methylation at nucleotide C2498 in 23S rRNA. The sequence is that of Ribosomal RNA large subunit methyltransferase M from Salmonella agona (strain SL483).